Reading from the N-terminus, the 78-residue chain is Acyl carrier protein (78 aa).

One can recognise a Carrier domain in the interval 1–76; it reads MALFEDIQAV…DVVKYIEDNK (76 aa). Serine 36 is subject to O-(pantetheine 4'-phosphoryl)serine.

It belongs to the acyl carrier protein (ACP) family. Post-translationally, 4'-phosphopantetheine is transferred from CoA to a specific serine of apo-ACP by AcpS. This modification is essential for activity because fatty acids are bound in thioester linkage to the sulfhydryl of the prosthetic group.

Its subcellular location is the cytoplasm. Its pathway is lipid metabolism; fatty acid biosynthesis. Functionally, carrier of the growing fatty acid chain in fatty acid biosynthesis. This Helicobacter pylori (strain ATCC 700392 / 26695) (Campylobacter pylori) protein is Acyl carrier protein.